The chain runs to 194 residues: Thioredoxin peroxidase (194 aa).

In terms of domain architecture, Thioredoxin spans 2-160 (LQPNMPAPNF…ALRLLDAFIF (159 aa)). The Cysteine sulfenic acid (-SOH) intermediate role is filled by cysteine 47.

Belongs to the peroxiredoxin family. AhpC/Prx1 subfamily. In terms of assembly, homodimer; disulfide-linked, upon oxidation.

It catalyses the reaction a hydroperoxide + [thioredoxin]-dithiol = an alcohol + [thioredoxin]-disulfide + H2O. In terms of biological role, antioxidant. Could be involved in protection against reactive oxygen species (ROS) generated by metabolic processes and/or protection of the parasite against ROS released by immune effector cells. Functionally, thiol-specific peroxidase that catalyzes the reduction of hydrogen peroxide and organic hydroperoxides to water and alcohols, respectively. Plays a role in cell protection against oxidative stress by detoxifying peroxides and as sensor of hydrogen peroxide-mediated signaling events. The polypeptide is Thioredoxin peroxidase (Fasciola hepatica (Liver fluke)).